Reading from the N-terminus, the 313-residue chain is MFIIYLFIFLSSAIIDSNGVAMAQKIEAIGGKGGKRWDDGANDNVAKVYIRGDHEGIQYIKFDYVKDGQSFNGSVHGVSADGFTQTFEIDHLQYEQIVSVEGYYDWKTGVMQALQFKTNLKTSEFIGYQKGTKFSLGVDGKVIVGFHGSAWRSLRSLGAYVKTAPTKSELQGGITGGEYWDDGPNFDGVRKVYVTFTETHIRSMNIDYDQDGQVVTRYHGMKNGETQEFAVDFPNEYMTSVEGTYDHISEGNYLVLTSLTFKTSKGRISQTFGLVIGTKFVLETKGNVISGFHGRDGGSFDAIGVYFSPMISS.

An N-terminal signal peptide occupies residues M1–A23. Jacalin-type lectin domains follow at residues Q24–T163 and P165–P309.

Belongs to the jacalin lectin family.

The chain is Jacalin-related lectin 8 (JAL8) from Arabidopsis thaliana (Mouse-ear cress).